The primary structure comprises 487 residues: Cobyric acid synthase (487 aa).

The region spanning 251–439 (KLKVVAPAYP…CHGVLDHPEA (189 aa)) is the GATase cobBQ-type domain. The Nucleophile role is filled by cysteine 332. Histidine 431 is an active-site residue.

The protein belongs to the CobB/CobQ family. CobQ subfamily.

It functions in the pathway cofactor biosynthesis; adenosylcobalamin biosynthesis. Its function is as follows. Catalyzes amidations at positions B, D, E, and G on adenosylcobyrinic A,C-diamide. NH(2) groups are provided by glutamine, and one molecule of ATP is hydrogenolyzed for each amidation. The sequence is that of Cobyric acid synthase from Dechloromonas aromatica (strain RCB).